The chain runs to 227 residues: Cytochrome c oxidase subunit 2 (227 aa).

At 1-14 the chain is on the mitochondrial intermembrane side; it reads MANHSQLGFQDASS. Residues 15–45 form a helical membrane-spanning segment; it reads PIMEELVEFHDHALMVALAICSLVLYLLTLM. Residues 46–58 lie on the Mitochondrial matrix side of the membrane; the sequence is LTQKLSSNTVDAQ. The chain crosses the membrane as a helical span at residues 59 to 86; sequence EVELIWTILPAIVLVLLALPSLQILYMM. Over 87-227 the chain is Mitochondrial intermembrane; sequence DEIEEPDLTL…FETWSSLLSS (141 aa). Cu cation is bound by residues histidine 160, cysteine 195, glutamate 197, cysteine 199, histidine 203, and methionine 206. Glutamate 197 lines the Mg(2+) pocket.

This sequence belongs to the cytochrome c oxidase subunit 2 family. As to quaternary structure, component of the cytochrome c oxidase (complex IV, CIV), a multisubunit enzyme composed of 14 subunits. The complex is composed of a catalytic core of 3 subunits MT-CO1, MT-CO2 and MT-CO3, encoded in the mitochondrial DNA, and 11 supernumerary subunits COX4I, COX5A, COX5B, COX6A, COX6B, COX6C, COX7A, COX7B, COX7C, COX8 and NDUFA4, which are encoded in the nuclear genome. The complex exists as a monomer or a dimer and forms supercomplexes (SCs) in the inner mitochondrial membrane with NADH-ubiquinone oxidoreductase (complex I, CI) and ubiquinol-cytochrome c oxidoreductase (cytochrome b-c1 complex, complex III, CIII), resulting in different assemblies (supercomplex SCI(1)III(2)IV(1) and megacomplex MCI(2)III(2)IV(2)). Found in a complex with TMEM177, COA6, COX18, COX20, SCO1 and SCO2. Interacts with TMEM177 in a COX20-dependent manner. Interacts with COX20. Interacts with COX16. The cofactor is Cu cation.

It is found in the mitochondrion inner membrane. It catalyses the reaction 4 Fe(II)-[cytochrome c] + O2 + 8 H(+)(in) = 4 Fe(III)-[cytochrome c] + 2 H2O + 4 H(+)(out). In terms of biological role, component of the cytochrome c oxidase, the last enzyme in the mitochondrial electron transport chain which drives oxidative phosphorylation. The respiratory chain contains 3 multisubunit complexes succinate dehydrogenase (complex II, CII), ubiquinol-cytochrome c oxidoreductase (cytochrome b-c1 complex, complex III, CIII) and cytochrome c oxidase (complex IV, CIV), that cooperate to transfer electrons derived from NADH and succinate to molecular oxygen, creating an electrochemical gradient over the inner membrane that drives transmembrane transport and the ATP synthase. Cytochrome c oxidase is the component of the respiratory chain that catalyzes the reduction of oxygen to water. Electrons originating from reduced cytochrome c in the intermembrane space (IMS) are transferred via the dinuclear copper A center (CU(A)) of subunit 2 and heme A of subunit 1 to the active site in subunit 1, a binuclear center (BNC) formed by heme A3 and copper B (CU(B)). The BNC reduces molecular oxygen to 2 water molecules using 4 electrons from cytochrome c in the IMS and 4 protons from the mitochondrial matrix. The chain is Cytochrome c oxidase subunit 2 (MT-CO2) from Coturnix japonica (Japanese quail).